We begin with the raw amino-acid sequence, 518 residues long: OTU domain-containing protein 5 (518 aa).

2 disordered regions span residues 1–79 (MTIL…SGGA) and 105–144 (PGHS…ETAA). A compositionally biased stretch (pro residues) spans 39–53 (SSPPPRWAYPGNPAP). Over residues 116-125 (SAGPGAPGSS) the composition is skewed to low complexity. The OTU domain maps to 171 to 294 (FIIKQMKEDG…NIHYNSVVNP (124 aa)). Positions 176-182 (MKEDGAC) are cys-loop. The active site involves Asp-179. The active-site Nucleophile is the Cys-182. Positions 231–241 (KRKNNCHGNHI) are variable-loop. Residues 282–287 (YHRNIH) form a his-loop region. The active site involves His-287. Residues 371–450 (ARQPRKASAT…GPSNQTCAGA (80 aa)) form a disordered region. Positions 377–390 (ASATCSSATAAASS) are enriched in low complexity.

The protein belongs to the peptidase C85 family.

It catalyses the reaction Thiol-dependent hydrolysis of ester, thioester, amide, peptide and isopeptide bonds formed by the C-terminal Gly of ubiquitin (a 76-residue protein attached to proteins as an intracellular targeting signal).. Its function is as follows. Deubiquitinating enzyme that may function as negative regulator of the innate immune system. Has peptidase activity towards 'Lys-48'- and 'Lys-63'-linked polyubiquitin chains. Can also cleave 'Lys-11'-linked ubiquitin chains (in vitro). This is OTU domain-containing protein 5 (otud5) from Xenopus tropicalis (Western clawed frog).